The sequence spans 296 residues: 4-hydroxybenzoate octaprenyltransferase (296 aa).

The next 8 membrane-spanning stretches (helical) occupy residues 28–48, 52–72, 102–122, 146–166, 169–189, 219–239, 241–261, and 275–295; these read PIGIYLLLWPTLVALWIAAEG, LSHVLIFTFGVVLTRAGGCAI, ALILFAVLMGAAFLLVLCTNA, YYPQVVLGAAYSWGILMTFTA, GELPATAWLLYIANLLWTVGY, VIILTLQGLSLGCLLLAGARF, LGGWFHLGLAVAAACFAWEFW, and FLHNHWAGLAIFVGVVLDYAL.

This sequence belongs to the UbiA prenyltransferase family. Mg(2+) is required as a cofactor.

Its subcellular location is the cell inner membrane. The catalysed reaction is all-trans-octaprenyl diphosphate + 4-hydroxybenzoate = 4-hydroxy-3-(all-trans-octaprenyl)benzoate + diphosphate. It functions in the pathway cofactor biosynthesis; ubiquinone biosynthesis. Its function is as follows. Catalyzes the prenylation of para-hydroxybenzoate (PHB) with an all-trans polyprenyl group. Mediates the second step in the final reaction sequence of ubiquinone-8 (UQ-8) biosynthesis, which is the condensation of the polyisoprenoid side chain with PHB, generating the first membrane-bound Q intermediate 3-octaprenyl-4-hydroxybenzoate. This is 4-hydroxybenzoate octaprenyltransferase from Pseudomonas fluorescens (strain ATCC BAA-477 / NRRL B-23932 / Pf-5).